We begin with the raw amino-acid sequence, 223 residues long: Type III pantothenate kinase (223 aa).

Asp17–His24 contacts ATP. Residues Tyr81 and Gly85–Arg88 each bind substrate. Asp87 functions as the Proton acceptor in the catalytic mechanism. Asp102 contacts K(+). Ser105 provides a ligand contact to ATP. Residue Thr157 participates in substrate binding.

The protein belongs to the type III pantothenate kinase family. Homodimer. NH4(+) is required as a cofactor. K(+) serves as cofactor.

The protein localises to the cytoplasm. The catalysed reaction is (R)-pantothenate + ATP = (R)-4'-phosphopantothenate + ADP + H(+). The protein operates within cofactor biosynthesis; coenzyme A biosynthesis; CoA from (R)-pantothenate: step 1/5. Its function is as follows. Catalyzes the phosphorylation of pantothenate (Pan), the first step in CoA biosynthesis. The polypeptide is Type III pantothenate kinase (Helicobacter pylori (strain J99 / ATCC 700824) (Campylobacter pylori J99)).